We begin with the raw amino-acid sequence, 412 residues long: Class E basic helix-loop-helix protein 40 (412 aa).

Residues 1 to 21 (MERIPSAQPPPTCLPKAPGLE) are disordered. The segment at 1 to 139 (MERIPSAQPP…LSGRNVEAGQ (139 aa)) is essential for interaction with BMAL1, E-box binding and repressor activity against the CLOCK-BMAL1 heterodimer. One can recognise a bHLH domain in the interval 52 to 107 (TYKLPHRLIEKKRRDRINECIAQLKDLLPEHLKLTTLGHLEKAVVLELTLKHVKAL). Residues 75 to 79 (LKDLL) form a necessary for interaction with RXRA and repressor activity against RXRA region. The Orange domain occupies 142–175 (FCSGFQTCAREVLQYLAKHENTRDLKSSQLVTHL). K159 is covalently cross-linked (Glycyl lysine isopeptide (Lys-Gly) (interchain with G-Cter in SUMO1, SUMO2 and SUMO3)). K167 participates in a covalent cross-link: Glycyl lysine isopeptide (Lys-Gly) (interchain with G-Cter in SUMO2). Disordered regions lie at residues 182 to 257 (LLQG…LRVE) and 279 to 298 (KQESEEPPMKKSRMQLSDDE). Residue S235 is modified to Phosphoserine. Positions 248-257 (ESEKSELRVE) are enriched in basic and acidic residues. K279 is covalently cross-linked (Glycyl lysine isopeptide (Lys-Gly) (interchain with G-Cter in SUMO1); alternate). A Glycyl lysine isopeptide (Lys-Gly) (interchain with G-Cter in SUMO1, SUMO2 and SUMO3); alternate cross-link involves residue K279. A Glycyl lysine isopeptide (Lys-Gly) (interchain with G-Cter in SUMO2); alternate cross-link involves residue K279. Residue K288 forms a Glycyl lysine isopeptide (Lys-Gly) (interchain with G-Cter in SUMO2) linkage. S383 is subject to Phosphoserine.

In terms of assembly, homodimer. Heterodimer with BHLHE41/DEC2. Interacts with TCF3/E47. Interacts with ubiquitin-conjugating enzyme UBE2I/UBC9. Interacts with HDAC1, SUMO1, RXRA and BMAL1. Post-translationally, ubiquitinated; which may lead to proteasomal degradation. Sumoylation inhibits its ubiquitination and promotes its negative regulation of the CLOCK-BMAL1 heterodimer transcriptional activator activity.

Its subcellular location is the cytoplasm. It localises to the nucleus. Functionally, transcriptional repressor involved in the regulation of the circadian rhythm by negatively regulating the activity of the clock genes and clock-controlled genes. Acts as the negative limb of a novel autoregulatory feedback loop (DEC loop) which differs from the one formed by the PER and CRY transcriptional repressors (PER/CRY loop). Both these loops are interlocked as it represses the expression of PER1/2 and in turn is repressed by PER1/2 and CRY1/2. Represses the activity of the circadian transcriptional activator: CLOCK-BMAL1|BMAL2 heterodimer by competing for the binding to E-box elements (5'-CACGTG-3') found within the promoters of its target genes. Negatively regulates its own expression and the expression of DBP and BHLHE41/DEC2. Acts as a corepressor of RXR and the RXR-LXR heterodimers and represses the ligand-induced RXRA and NR1H3/LXRA transactivation activity. May be involved in the regulation of chondrocyte differentiation via the cAMP pathway. Represses the transcription of NR0B2 and attentuates the transactivation of NR0B2 by the CLOCK-BMAL1 complex. Drives the circadian rhythm of blood pressure through transcriptional repression of ATP1B1 in the cardiovascular system. This chain is Class E basic helix-loop-helix protein 40 (BHLHE40), found in Ovis aries (Sheep).